The primary structure comprises 386 residues: Succinate--CoA ligase [ADP-forming] subunit beta (386 aa).

The region spanning 9–244 is the ATP-grasp domain; the sequence is KDLLASYDVP…PSQENVRDVL (236 aa). ATP-binding positions include lysine 46, 53–55, valine 102, and glutamate 107; that span reads GRG. Asparagine 199 and aspartate 213 together coordinate Mg(2+). Substrate is bound by residues asparagine 264 and 321–323; that span reads GIM.

This sequence belongs to the succinate/malate CoA ligase beta subunit family. As to quaternary structure, heterotetramer of two alpha and two beta subunits. It depends on Mg(2+) as a cofactor.

The catalysed reaction is succinate + ATP + CoA = succinyl-CoA + ADP + phosphate. It carries out the reaction GTP + succinate + CoA = succinyl-CoA + GDP + phosphate. It participates in carbohydrate metabolism; tricarboxylic acid cycle; succinate from succinyl-CoA (ligase route): step 1/1. In terms of biological role, succinyl-CoA synthetase functions in the citric acid cycle (TCA), coupling the hydrolysis of succinyl-CoA to the synthesis of either ATP or GTP and thus represents the only step of substrate-level phosphorylation in the TCA. The beta subunit provides nucleotide specificity of the enzyme and binds the substrate succinate, while the binding sites for coenzyme A and phosphate are found in the alpha subunit. The protein is Succinate--CoA ligase [ADP-forming] subunit beta of Chlamydia pneumoniae (Chlamydophila pneumoniae).